A 429-amino-acid polypeptide reads, in one-letter code: Glucose-1-phosphate adenylyltransferase (429 aa).

Residues Gly162, Glu177–Lys178, and Ser209 each bind alpha-D-glucose 1-phosphate.

Belongs to the bacterial/plant glucose-1-phosphate adenylyltransferase family. As to quaternary structure, homotetramer.

It catalyses the reaction alpha-D-glucose 1-phosphate + ATP + H(+) = ADP-alpha-D-glucose + diphosphate. It functions in the pathway glycan biosynthesis; glycogen biosynthesis. With respect to regulation, activated by 3-phosphoglycerate and inhibited by phosphate. Its function is as follows. Involved in the biosynthesis of ADP-glucose, a building block required for the elongation reactions to produce glycogen. Catalyzes the reaction between ATP and alpha-D-glucose 1-phosphate (G1P) to produce pyrophosphate and ADP-Glc. The polypeptide is Glucose-1-phosphate adenylyltransferase (Nostoc sp. (strain PCC 7120 / SAG 25.82 / UTEX 2576)).